A 216-amino-acid polypeptide reads, in one-letter code: Probable transaldolase (216 aa).

The active-site Schiff-base intermediate with substrate is the Lys83.

This sequence belongs to the transaldolase family. Type 3B subfamily.

Its subcellular location is the cytoplasm. It carries out the reaction D-sedoheptulose 7-phosphate + D-glyceraldehyde 3-phosphate = D-erythrose 4-phosphate + beta-D-fructose 6-phosphate. It participates in carbohydrate degradation; pentose phosphate pathway; D-glyceraldehyde 3-phosphate and beta-D-fructose 6-phosphate from D-ribose 5-phosphate and D-xylulose 5-phosphate (non-oxidative stage): step 2/3. In terms of biological role, transaldolase is important for the balance of metabolites in the pentose-phosphate pathway. The chain is Probable transaldolase from Sphingopyxis alaskensis (strain DSM 13593 / LMG 18877 / RB2256) (Sphingomonas alaskensis).